A 613-amino-acid chain; its full sequence is Zinc finger CCCH domain-containing protein 59 (613 aa).

Residues 275-296 are disordered; sequence NTTLSPYISPAKSVPVEETPKR. 2 C3H1-type zinc fingers span residues 318-346 and 350-378; these read AGGNRLCFKFTSSGSCPRGSKCNYRHDEE and HYNRNVCFDFLNKGKCEKGPECRFAHSLS.

The polypeptide is Zinc finger CCCH domain-containing protein 59 (Oryza sativa subsp. japonica (Rice)).